Consider the following 141-residue polypeptide: Lutropin subunit beta (141 aa).

A signal peptide spans 1–20; sequence MEMLQGLLLLMLLSMGGTWA. 6 disulfides stabilise this stretch: Cys29/Cys77, Cys43/Cys92, Cys46/Cys130, Cys54/Cys108, Cys58/Cys110, and Cys113/Cys120. Asn33 and Asn50 each carry an N-linked (GlcNAc...) asparagine glycan.

It belongs to the glycoprotein hormones subunit beta family. Heterodimer of a common alpha chain and a unique beta chain which confers biological specificity to thyrotropin, lutropin, follitropin and gonadotropin.

It localises to the secreted. Functionally, promotes spermatogenesis and ovulation by stimulating the testes and ovaries to synthesize steroids. The sequence is that of Lutropin subunit beta (LHB) from Pongo pygmaeus (Bornean orangutan).